The sequence spans 143 residues: MAVERTLSIIKPDAVGKNHIGEIIARFEKAGLKPVAMKYKHLSQAEAEGFYAEHKERGFFADLVAFMTSGPVVVSALEGENAVLAHREILGATNPKEAAPGTIRADFATSIDENAAHGSDSVASAEREIAYFFAADEIFPRTR.

Residues Lys-11, Phe-59, Arg-87, Thr-93, Arg-104, and Asn-114 each contribute to the ATP site. Catalysis depends on His-117, which acts as the Pros-phosphohistidine intermediate.

The protein belongs to the NDK family. Homotetramer. Requires Mg(2+) as cofactor.

It localises to the cytoplasm. The enzyme catalyses a 2'-deoxyribonucleoside 5'-diphosphate + ATP = a 2'-deoxyribonucleoside 5'-triphosphate + ADP. The catalysed reaction is a ribonucleoside 5'-diphosphate + ATP = a ribonucleoside 5'-triphosphate + ADP. Its function is as follows. Major role in the synthesis of nucleoside triphosphates other than ATP. The ATP gamma phosphate is transferred to the NDP beta phosphate via a ping-pong mechanism, using a phosphorylated active-site intermediate. The sequence is that of Nucleoside diphosphate kinase from Acinetobacter baylyi (strain ATCC 33305 / BD413 / ADP1).